Consider the following 123-residue polypeptide: Double-stranded DNA deaminase immunity protein (123 aa).

The toxic domain forms a 1:1 complex with the DddI immunity protein. This protein blocks the active site of the toxin.

Immunity protein component of a toxin-immunity protein module, which functions as a cellular contact-dependent growth inhibition (CDI) system. CDI modules allow bacteria to communicate with and inhibit the growth of closely related neighboring bacteria in a contact-dependent fashion. Bacteria that have this module inhibit or kill bacteria without it, giving them a growth advantage. Specifically inhibits the toxic activity of cognate toxin DddA (C-terminal 163 residue fragment) upon expression in E.coli. This Burkholderia cenocepacia (strain H111) protein is Double-stranded DNA deaminase immunity protein.